The primary structure comprises 251 residues: uncharacterized protein (251 aa).

The region spanning 3–118 (KVVICDDERI…QLEHILDILV (116 aa)) is the Response regulatory domain. Asp55 is modified (4-aspartylphosphate). In terms of domain architecture, HTH araC/xylS-type spans 152-249 (NQILSQIKQH…HMSPSDYNKL (98 aa)). 2 DNA-binding regions (H-T-H motif) span residues 169-190 (LDLINPIVVSESYAMRTFKEHV) and 216-239 (HYEIAEKVGFSEYKMFCYHFKKYL).

Post-translationally, phosphorylated by SE_0166.

It localises to the cytoplasm. In terms of biological role, probable member of the two-component regulatory system SE_0166/SE_0165. This is an uncharacterized protein from Staphylococcus epidermidis (strain ATCC 12228 / FDA PCI 1200).